The chain runs to 838 residues: Ribonucleoside-diphosphate reductase large subunit (838 aa).

Residues 6 to 97 enclose the ATP-cone domain; sequence KLVTKRDGSV…VTALHKTTTE (92 aa). Residues 10–11, 16–22, Thr58, and Asp62 each bind ATP; these read KR and EPYDEKV. Ser227 contributes to the GDP binding site. A disulfide bridge connects residues Cys228 and Cys454. DTTP contacts are provided by residues 236 to 238, Lys253, Arg266, and 273 to 274; these read DSI and AG. Asn437 serves as a coordination point for GDP. Residue Asn437 is the Proton acceptor of the active site. Cys439 (cysteine radical intermediate) is an active-site residue. Residues Glu441 and 626–629 contribute to the GDP site; that span reads TAST. The active-site Proton acceptor is the Glu441. Basic and acidic residues predominate over residues 780-794; the sequence is KELPKPDKQSKEEVH. A disordered region spans residues 780-838; sequence KELPKPDKQSKEEVHGSVGRGKRKRVGEKPTANHSNAGAPNLNGPPDTDGDGGCLNCGS.

It belongs to the ribonucleoside diphosphate reductase large chain family. Heterodimer of a large and a small subunit.

It catalyses the reaction a 2'-deoxyribonucleoside 5'-diphosphate + [thioredoxin]-disulfide + H2O = a ribonucleoside 5'-diphosphate + [thioredoxin]-dithiol. The catalysed reaction is dCDP + [thioredoxin]-disulfide + H2O = CDP + [thioredoxin]-dithiol. With respect to regulation, under complex allosteric control mediated by deoxynucleoside triphosphates and ATP binding to separate specificity and activation sites on the large subunit. The type of nucleotide bound at the specificity site determines substrate preference. It seems probable that ATP makes the enzyme reduce CDP and UDP, dGTP favors ADP reduction and dTTP favors GDP reduction. Stimulated by ATP and inhibited by dATP binding to the activity site. Functionally, provides the precursors necessary for DNA synthesis. Catalyzes the rate limiting step in the de novo synthesis of deoxyribonucleotides by directly reducing ribonucleotides to the corresponding deoxyribonucleotides. In Trypanosoma brucei brucei, this protein is Ribonucleoside-diphosphate reductase large subunit (RNR1).